The chain runs to 508 residues: Hydroxymethylglutaryl-CoA synthase, mitochondrial (508 aa).

Residues 1 to 37 constitute a mitochondrion transit peptide; the sequence is MQRLLTPVRQVLQVKRVMQEASLLPARLLPAAHPSFS. N6-succinyllysine is present on Lys52. Glu80 and Ala81 together coordinate (3S)-3-hydroxy-3-methylglutaryl-CoA. The active-site Proton donor/acceptor is Glu132. Residues Cys166, Asn204, and Thr208 each contribute to the (3S)-3-hydroxy-3-methylglutaryl-CoA site. The active-site Acyl-thioester intermediate is the Cys166. An N6-acetyllysine modification is found at Lys243. Lys256 carries the post-translational modification N6-acetyllysine; alternate. The residue at position 256 (Lys256) is an N6-succinyllysine; alternate. Ser258 and His301 together coordinate (3S)-3-hydroxy-3-methylglutaryl-CoA. His301 acts as the Proton donor/acceptor in catalysis. N6-acetyllysine is present on Lys306. Lys310 contributes to the (3S)-3-hydroxy-3-methylglutaryl-CoA binding site. An N6-acetyllysine; alternate modification is found at Lys310. An N6-succinyllysine; alternate modification is found at Lys310. At Lys333 the chain carries N6-succinyllysine. N6-acetyllysine; alternate is present on residues Lys342, Lys350, Lys354, and Lys358. Lys342, Lys350, Lys354, and Lys358 each carry N6-succinyllysine; alternate. (3S)-3-hydroxy-3-methylglutaryl-CoA contacts are provided by Asn380 and Ser414. Ser433 bears the Phosphoserine mark. Lys437 carries the post-translational modification N6-acetyllysine. At Ser440 the chain carries Phosphoserine. Lys447 carries the post-translational modification N6-acetyllysine; alternate. Lys447 bears the N6-succinyllysine; alternate mark. Ser456 carries the phosphoserine modification. An N6-acetyllysine; alternate modification is found at Lys473. Lys473 carries the N6-succinyllysine; alternate modification. Ser477 is modified (phosphoserine).

It belongs to the thiolase-like superfamily. HMG-CoA synthase family. As to quaternary structure, homodimer. In terms of processing, succinylated. Desuccinylated by SIRT5. Succinylation, at least at Lys-310, inhibits the enzymatic activity.

It is found in the mitochondrion. The catalysed reaction is acetoacetyl-CoA + acetyl-CoA + H2O = (3S)-3-hydroxy-3-methylglutaryl-CoA + CoA + H(+). The protein operates within metabolic intermediate biosynthesis; (R)-mevalonate biosynthesis; (R)-mevalonate from acetyl-CoA: step 2/3. In terms of biological role, catalyzes the first irreversible step in ketogenesis, condensing acetyl-CoA to acetoacetyl-CoA to form HMG-CoA, which is converted by HMG-CoA reductase (HMGCR) into mevalonate. This Bos taurus (Bovine) protein is Hydroxymethylglutaryl-CoA synthase, mitochondrial (HMGCS2).